The chain runs to 331 residues: E3 ubiquitin-protein ligase Siah2 (331 aa).

The disordered stretch occupies residues 1–26 (MSRPSSAGGAAGGLGAGKAGGSKHGG). The segment covering 9–26 (GAAGGLGAGKAGGSKHGG) has biased composition (gly residues). The segment at 89 to 124 (CPVCFDYVLPPILQCQAGHLVCNQCRQKLSCCPTCR) adopts an RING-type zinc-finger fold. The segment at 139–331 (VASTLPFPCK…LGINVTISMC (193 aa)) is SBD. The segment at 142-202 (TLPFPCKYSS…VMPHLMHAHK (61 aa)) adopts an SIAH-type zinc-finger fold. Residues C147, C154, H166, C170, C177, C184, H196, and H201 each contribute to the Zn(2+) site.

This sequence belongs to the SINA (Seven in absentia) family. As to quaternary structure, homodimer. In terms of tissue distribution, in embryos it is expressed in all blastomeres starting at the mid-blastulla. After 20 somite stage, it is expressed mainly in the posterior part. Expressed in brain, including the eye, the cranial cavity, otic vesicle, optic chiasm and in the gut.

It catalyses the reaction S-ubiquitinyl-[E2 ubiquitin-conjugating enzyme]-L-cysteine + [acceptor protein]-L-lysine = [E2 ubiquitin-conjugating enzyme]-L-cysteine + N(6)-ubiquitinyl-[acceptor protein]-L-lysine.. It participates in protein modification; protein ubiquitination. Functionally, E3 ubiquitin-protein ligase that mediates ubiquitination and subsequent proteasomal degradation of target proteins. E3 ubiquitin ligases accept ubiquitin from an E2 ubiquitin-conjugating enzyme in the form of a thioester and then directly transfers the ubiquitin to targeted substrates. It probably triggers the ubiquitin-mediated degradation of different substrates. Induces cellular growth arrest by inhibiting the G2/M transition. May play a role in the regulation of the cellular clock function. This chain is E3 ubiquitin-protein ligase Siah2 (siah2l), found in Danio rerio (Zebrafish).